The following is a 123-amino-acid chain: U11/U12 small nuclear ribonucleoprotein 25 kDa protein (123 aa).

The Ubiquitin-like domain maps to 32-123 (MTVRVCKMDG…VSFIKKLRQK (92 aa)).

As to quaternary structure, component of the U11/U12 snRNPs that are part of the U12-type spliceosome.

The protein localises to the nucleus. The polypeptide is U11/U12 small nuclear ribonucleoprotein 25 kDa protein (SNRNP25) (Bos taurus (Bovine)).